Consider the following 199-residue polypeptide: Putative pseudouridine methyltransferase (199 aa).

S-adenosyl-L-methionine-binding residues include Leu-132 and Cys-186.

Belongs to the methyltransferase superfamily. TrmY family.

Its subcellular location is the cytoplasm. This Vibrio campbellii (strain ATCC BAA-1116) protein is Putative pseudouridine methyltransferase.